We begin with the raw amino-acid sequence, 625 residues long: tRNA uridine 5-carboxymethylaminomethyl modification enzyme MnmG (625 aa).

FAD-binding positions include 10–15 (GGGHAG), valine 122, and serine 177. 271 to 285 (GPRYCPSIEDKVNRF) contributes to the NAD(+) binding site. Glutamine 368 lines the FAD pocket.

Belongs to the MnmG family. Homodimer. Heterotetramer of two MnmE and two MnmG subunits. Requires FAD as cofactor.

It is found in the cytoplasm. In terms of biological role, NAD-binding protein involved in the addition of a carboxymethylaminomethyl (cmnm) group at the wobble position (U34) of certain tRNAs, forming tRNA-cmnm(5)s(2)U34. This Wolinella succinogenes (strain ATCC 29543 / DSM 1740 / CCUG 13145 / JCM 31913 / LMG 7466 / NCTC 11488 / FDC 602W) (Vibrio succinogenes) protein is tRNA uridine 5-carboxymethylaminomethyl modification enzyme MnmG.